A 449-amino-acid chain; its full sequence is Phosphoglucosamine mutase (449 aa).

Ser101 (phosphoserine intermediate) is an active-site residue. Residues Ser101, Asp242, Asp244, and Asp246 each coordinate Mg(2+). Phosphoserine is present on Ser101.

The protein belongs to the phosphohexose mutase family. Mg(2+) is required as a cofactor. Activated by phosphorylation.

The enzyme catalyses alpha-D-glucosamine 1-phosphate = D-glucosamine 6-phosphate. In terms of biological role, catalyzes the conversion of glucosamine-6-phosphate to glucosamine-1-phosphate. The protein is Phosphoglucosamine mutase of Bradyrhizobium sp. (strain ORS 278).